Here is a 148-residue protein sequence, read N- to C-terminus: Ubiquitin-conjugating enzyme E2 11 (148 aa).

In terms of domain architecture, UBC core spans methionine 1–methionine 147. The active-site Glycyl thioester intermediate is cysteine 85.

This sequence belongs to the ubiquitin-conjugating enzyme family. As to quaternary structure, interacts with the E3 ubiquitin-protein ligases MBR1 and MBR2. As to expression, ubiquitously expressed. Mainly in petals.

It carries out the reaction S-ubiquitinyl-[E1 ubiquitin-activating enzyme]-L-cysteine + [E2 ubiquitin-conjugating enzyme]-L-cysteine = [E1 ubiquitin-activating enzyme]-L-cysteine + S-ubiquitinyl-[E2 ubiquitin-conjugating enzyme]-L-cysteine.. Its pathway is protein modification; protein ubiquitination. Its function is as follows. Accepts the ubiquitin from the E1 complex and catalyzes its covalent attachment to other proteins. Mediates the selective degradation of short-lived and abnormal proteins. The polypeptide is Ubiquitin-conjugating enzyme E2 11 (UBC11) (Arabidopsis thaliana (Mouse-ear cress)).